A 257-amino-acid chain; its full sequence is Large ribosomal subunit protein uL2 (257 aa).

Residues 207-231 form a disordered region; sequence VEHPFGGGNHQHIGKPSTIRRDAPA.

This sequence belongs to the universal ribosomal protein uL2 family. In terms of assembly, component of the large ribosomal subunit.

The protein localises to the cytoplasm. Component of the large ribosomal subunit. The ribosome is a large ribonucleoprotein complex responsible for the synthesis of proteins in the cell. This is Large ribosomal subunit protein uL2 (rpl8) from Xenopus laevis (African clawed frog).